Consider the following 114-residue polypeptide: Protein D2 (114 aa).

This sequence belongs to the phosphatidylethanolamine-binding protein family.

The protein is Protein D2 (D2) of Onchocerca volvulus.